Here is a 257-residue protein sequence, read N- to C-terminus: Homeobox protein ceh-36 (257 aa).

Residues 33-49 show a composition bias toward low complexity; sequence SATTSSTTMAPMAPNSE. Disordered regions lie at residues 33–63 and 113–156; these read SATTSSTTMAPMAPNSESGRRAGRRERTSFN and DRNN…GTPE. A DNA-binding region (homeobox) is located at residues 55-117; sequence GRRERTSFNR…NRRAKDRNNK (63 aa). Low complexity predominate over residues 123–137; the sequence is HPGSTSSRSSNGSPH.

Belongs to the paired homeobox family. As to quaternary structure, interacts with sox-2. In terms of tissue distribution, expressed in ASE and AWC chemosensory neurons. Expressed left-right asymmetrically in the embryo, in the grandmother cell and the mother cell to the MI pharyngeal motorneuron but in neither analogous precursors of the e3D neuron.

The protein resides in the nucleus. In terms of biological role, probable transcription factor, acting as a progenitor identity factor regulating the development of lineally-related embryonic cells including glial, excretory and neuronal cells. Mediates chemosensory function of ASE and AWC neurons. In ASE neurons, required to diversify the fate of the ASEL neurons from the ASER neurons. Acts cell-autonomously to establish a neuronal left right asymmetry, possibly promoting asymmetric expression of the helix-loop-helix proteins ngn-1 and hlh-2. In cooperation with the transcription factor sox-2, required for the differentiation of AWC olfactory neurons. May regulate the expression of sox-2 in AWC olfactory neurons. This is Homeobox protein ceh-36 from Caenorhabditis elegans.